We begin with the raw amino-acid sequence, 285 residues long: Transmembrane protein 53-A (285 aa).

The chain crosses the membrane as a helical span at residues 165–185 (FLALAAFAILVIILRILLYPL).

The protein belongs to the TMEM53 family.

Its subcellular location is the nucleus outer membrane. Its function is as follows. Ensures normal bone formation, through the negative regulation of bone morphogenetic protein (BMP) signaling in osteoblast lineage cells by blocking cytoplasm-nucleus translocation of phosphorylated SMAD proteins. The polypeptide is Transmembrane protein 53-A (tmem53-a) (Xenopus laevis (African clawed frog)).